Reading from the N-terminus, the 158-residue chain is NAD(P)H-quinone oxidoreductase subunit N (158 aa).

This sequence belongs to the complex I NdhN subunit family. As to quaternary structure, NDH-1 can be composed of about 15 different subunits; different subcomplexes with different compositions have been identified which probably have different functions.

Its subcellular location is the cellular thylakoid membrane. The enzyme catalyses a plastoquinone + NADH + (n+1) H(+)(in) = a plastoquinol + NAD(+) + n H(+)(out). It carries out the reaction a plastoquinone + NADPH + (n+1) H(+)(in) = a plastoquinol + NADP(+) + n H(+)(out). Functionally, NDH-1 shuttles electrons from an unknown electron donor, via FMN and iron-sulfur (Fe-S) centers, to quinones in the respiratory and/or the photosynthetic chain. The immediate electron acceptor for the enzyme in this species is believed to be plastoquinone. Couples the redox reaction to proton translocation, and thus conserves the redox energy in a proton gradient. Cyanobacterial NDH-1 also plays a role in inorganic carbon-concentration. The sequence is that of NAD(P)H-quinone oxidoreductase subunit N from Cyanothece sp. (strain PCC 7425 / ATCC 29141).